The primary structure comprises 72 residues: Large ribosomal subunit protein bL31 (72 aa).

Residues Cys16, Cys18, Cys37, and Cys40 each contribute to the Zn(2+) site.

It belongs to the bacterial ribosomal protein bL31 family. Type A subfamily. Part of the 50S ribosomal subunit. It depends on Zn(2+) as a cofactor.

Binds the 23S rRNA. This is Large ribosomal subunit protein bL31 from Buchnera aphidicola subsp. Acyrthosiphon pisum (strain APS) (Acyrthosiphon pisum symbiotic bacterium).